We begin with the raw amino-acid sequence, 439 residues long: 5-hydroxybenzimidazole synthase (439 aa).

Substrate-binding positions include Met-96, Tyr-125, His-164, 187–189 (SKG), 228–231 (NGIR), and Glu-267. His-271 contacts Zn(2+). Tyr-294 is a binding site for substrate. His-335 serves as a coordination point for Zn(2+). Cys-410, Cys-413, and Cys-417 together coordinate [4Fe-4S] cluster.

It belongs to the ThiC family. 5-hydroxybenzimidazole synthase subfamily. As to quaternary structure, homodimer. [4Fe-4S] cluster is required as a cofactor.

It catalyses the reaction 5-amino-1-(5-phospho-beta-D-ribosyl)imidazole + AH2 + S-adenosyl-L-methionine = 5-hydroxybenzimidazole + 5'-deoxyadenosine + formate + L-methionine + A + NH4(+) + phosphate + 2 H(+). Its function is as follows. Catalyzes the conversion of aminoimidazole ribotide (AIR) to 5-hydroxybenzimidazole (5-HBI) in a radical S-adenosyl-L-methionine (SAM)-dependent reaction. Is thus involved in the anaerobic biosynthesis of the benzimidazole lower axial ligand of the cobamide produced by D.autotrophicum. The protein is 5-hydroxybenzimidazole synthase of Desulforapulum autotrophicum (strain ATCC 43914 / DSM 3382 / VKM B-1955 / HRM2) (Desulfobacterium autotrophicum).